The following is a 764-amino-acid chain: Nucleolar complex-associated protein 2 (764 aa).

Positions 3 to 69 (AKDDKKRVKK…EEELKRLQEK (67 aa)) form a coiled coil. Disordered regions lie at residues 23–67 (ELNN…KRLQ), 89–113 (ATEIEDDADVEPDTDLEDTEKEGDD), 627–646 (AVFGKNAPSSDDEDDEDRME), and 651–726 (AFNS…EDDA). Basic and acidic residues predominate over residues 30–41 (IDAHDIVMEQKS). Over residues 42–51 (DKKRGKKVKS) the composition is skewed to basic residues. The segment covering 52–67 (KKAEAEEHEEELKRLQ) has biased composition (basic and acidic residues). Residues 90-113 (TEIEDDADVEPDTDLEDTEKEGDD) are compositionally biased toward acidic residues. The segment covering 661–672 (DSKEKEPEEEKT) has biased composition (basic and acidic residues). Residues 673 to 680 (KKKKRKRG) carry the Nuclear localization signal 1 motif. Basic residues predominate over residues 673-682 (KKKKRKRGGK). Over residues 693–726 (GLGEDDVVEDFVLSSDEEEEDLFDIGGDKDEDDA) the composition is skewed to acidic residues. Positions 738-745 (SKKTKGTY) match the Nuclear localization signal 2 motif.

Belongs to the NOC2 family. Component of nucleolar complexes. Forms homodimers. Interacts with RBL and NOC3 in both the nucleolus and nucleoplasm. Binds to SWA2.

The protein localises to the nucleus. It is found in the nucleolus. It localises to the nucleoplasm. Its function is as follows. Together with SWA2, probably involved in pre-ribosome export from the nucleus to the cytoplasm. This is Nucleolar complex-associated protein 2 from Arabidopsis thaliana (Mouse-ear cress).